A 617-amino-acid chain; its full sequence is DNA mismatch repair protein MutL (617 aa).

It belongs to the DNA mismatch repair MutL/HexB family.

Functionally, this protein is involved in the repair of mismatches in DNA. It is required for dam-dependent methyl-directed DNA mismatch repair. May act as a 'molecular matchmaker', a protein that promotes the formation of a stable complex between two or more DNA-binding proteins in an ATP-dependent manner without itself being part of a final effector complex. The polypeptide is DNA mismatch repair protein MutL (Bartonella tribocorum (strain CIP 105476 / IBS 506)).